The chain runs to 534 residues: Fimbrial subunit type 2 (534 aa).

The first 32 residues, Met-1 to Ala-32, serve as a signal peptide directing secretion. Disordered stretches follow at residues Gly-56–Ala-76 and Thr-329–Gly-376. The span at Pro-334–Pro-347 shows a compositional bias: pro residues. The segment covering Thr-361–Gly-376 has biased composition (basic and acidic residues). The short motif at Leu-492–Gly-496 is the LPXTG sorting signal element. At Thr-495 the chain carries Pentaglycyl murein peptidoglycan amidated threonine. The propeptide at Gly-496–Ala-534 is removed by sortase.

The protein localises to the secreted. It is found in the cell wall. The protein resides in the fimbrium. Major fimbrial subunit of A.naeslundii. This is Fimbrial subunit type 2 from Actinomyces naeslundii.